A 255-amino-acid chain; its full sequence is High-affinity branched-chain amino acid transport ATP-binding protein LivG (255 aa).

Positions L6–E254 constitute an ABC transporter domain. G38–T45 provides a ligand contact to ATP.

It belongs to the ABC transporter superfamily.

Functionally, component of the leucine-specific transport system. The sequence is that of High-affinity branched-chain amino acid transport ATP-binding protein LivG (livG) from Escherichia coli O157:H7.